We begin with the raw amino-acid sequence, 251 residues long: MNDTGRRILLNCDMGESFGAWRMGDDVHSMPLVDQANLACGFHAGDPLTMRRAVELAVRHGVSIGAHPAYPDLSGFGRRSLACSAEEVHAMVLYQIGALDAFCRSLGTQVAYVKPHGALYNDLVGDDELLRAVLDACAAYRKGLPLMVLALADNGRELELADEADVPLLFEAFADRAYLPDGRLAPRRLGGAVHHDPQRIIEQALAIARGEAFPDYDGNPLRLTADSLCVHGDNPQSLAVLRRLRAALDSL.

The protein belongs to the LamB/PxpA family. In terms of assembly, forms a complex composed of PxpA, PxpB and PxpC.

The catalysed reaction is 5-oxo-L-proline + ATP + 2 H2O = L-glutamate + ADP + phosphate + H(+). Functionally, catalyzes the cleavage of 5-oxoproline to form L-glutamate coupled to the hydrolysis of ATP to ADP and inorganic phosphate. This chain is 5-oxoprolinase subunit A 3, found in Pseudomonas aeruginosa (strain ATCC 15692 / DSM 22644 / CIP 104116 / JCM 14847 / LMG 12228 / 1C / PRS 101 / PAO1).